Reading from the N-terminus, the 35-residue chain is Neurotoxin (35 aa).

Intrachain disulfides connect C7/C27, C14/C32, and C18/C34.

As to expression, expressed by the venom gland.

It is found in the secreted. In terms of biological role, neurotoxin. Decreases the action potential of myelinated nerves in mice and frogs. This Buthus sp. (strain IY-2001) (Scorpion) protein is Neurotoxin.